We begin with the raw amino-acid sequence, 403 residues long: Protein-export membrane protein SecD (403 aa).

Helical transmembrane passes span 14–34 (VILL…MGIQ), 238–258 (FAEG…VILI), 265–285 (ILVL…LGAA), 294–314 (LAAI…QIII), 336–356 (FFII…LAYI), and 365–385 (IGLL…GVFI).

The protein belongs to the SecD/SecF family. SecD subfamily. Part of the protein translocation apparatus. Forms a complex with SecF.

It localises to the cell membrane. Functionally, involved in protein export. The polypeptide is Protein-export membrane protein SecD (Methanothermobacter thermautotrophicus (strain ATCC 29096 / DSM 1053 / JCM 10044 / NBRC 100330 / Delta H) (Methanobacterium thermoautotrophicum)).